A 618-amino-acid polypeptide reads, in one-letter code: 1-deoxy-D-xylulose-5-phosphate synthase (618 aa).

Thiamine diphosphate is bound by residues histidine 76 and 117 to 119 (GHS). Position 148 (aspartate 148) interacts with Mg(2+). Thiamine diphosphate is bound by residues 149–150 (GA), asparagine 177, tyrosine 284, and glutamate 364. Asparagine 177 is a Mg(2+) binding site.

The protein belongs to the transketolase family. DXPS subfamily. In terms of assembly, homodimer. The cofactor is Mg(2+). Thiamine diphosphate is required as a cofactor.

It catalyses the reaction D-glyceraldehyde 3-phosphate + pyruvate + H(+) = 1-deoxy-D-xylulose 5-phosphate + CO2. It functions in the pathway metabolic intermediate biosynthesis; 1-deoxy-D-xylulose 5-phosphate biosynthesis; 1-deoxy-D-xylulose 5-phosphate from D-glyceraldehyde 3-phosphate and pyruvate: step 1/1. In terms of biological role, catalyzes the acyloin condensation reaction between C atoms 2 and 3 of pyruvate and glyceraldehyde 3-phosphate to yield 1-deoxy-D-xylulose-5-phosphate (DXP). The sequence is that of 1-deoxy-D-xylulose-5-phosphate synthase from Francisella philomiragia subsp. philomiragia (strain ATCC 25017 / CCUG 19701 / FSC 153 / O#319-036).